The following is a 311-amino-acid chain: Tricarboxylate transport protein, mitochondrial (311 aa).

Positions 1–13 (MAAPRGPRALSAA) are cleaved as a propeptide — removed in mature form. The disordered stretch occupies residues 1–21 (MAAPRGPRALSAAAPGSGKPK). Solcar repeat units follow at residues 23–111 (THPG…LSNH), 122–208 (RRGL…LRNW), and 218–303 (MNPL…VVKL). Helical transmembrane passes span 29-46 (ILAGGLAGGIEICITFPT), 86-105 (GLSSLLYGSIPKAAVRFGMF), and 129-143 (LGAGVAEAVVVVCPM). S156 is subject to Phosphoserine. A run of 3 helical transmembrane segments spans residues 183 to 202 (GLTATVLKQGSNQAIRFFVM), 224 to 241 (GVFGATAGAASVFGNTPL), and 278 to 297 (GTVPRLGRVCLDVAIVFIIY).

It belongs to the mitochondrial carrier (TC 2.A.29) family. Post-translationally, possesses a short cleavable presequence, which, however, is found to be dispensable both for targeting to mitochondria and insertion into the inner membrane. However, the presequence is required to keep SLC25A1 in a soluble state and thus in an import-competent state. Mature SLC25A1 lacking the presequence is prone to aggregation. As to expression, expressed minimally but ubiquitously throughout the adult brain. Detected at higher levels in the olfactory bulb, neocortex and cerebellum. Also expressed in a subset of large cells in the globus pallidus.

The protein localises to the mitochondrion inner membrane. It is found in the mitochondrion membrane. The enzyme catalyses (S)-malate(in) + citrate(out) = (S)-malate(out) + citrate(in). It carries out the reaction D-threo-isocitrate(in) + citrate(out) = D-threo-isocitrate(out) + citrate(in). It catalyses the reaction citrate(out) + succinate(in) = citrate(in) + succinate(out). The catalysed reaction is cis-aconitate(in) + citrate(out) = cis-aconitate(out) + citrate(in). The enzyme catalyses trans-aconitate(in) + citrate(out) = trans-aconitate(out) + citrate(in). It carries out the reaction phosphoenolpyruvate(in) + citrate(out) = phosphoenolpyruvate(out) + citrate(in). It catalyses the reaction maleate(in) + citrate(out) = maleate(out) + citrate(in). In terms of biological role, mitochondrial electroneutral antiporter that exports citrate from the mitochondria into the cytosol in exchange for malate. Also able to mediate the exchange of citrate for isocitrate, phosphoenolpyruvate, cis-aconitate and to a lesser extent trans-aconitate, maleate and succinate. In the cytoplasm, citrate plays important roles in fatty acid and sterol synthesis, regulation of glycolysis, protein acetylation, and other physiopathological processes. The protein is Tricarboxylate transport protein, mitochondrial of Mus musculus (Mouse).